The chain runs to 257 residues: Imidazole glycerol phosphate synthase subunit HisF (257 aa).

Active-site residues include Asp-12 and Asp-131.

The protein belongs to the HisA/HisF family. Heterodimer of HisH and HisF.

Its subcellular location is the cytoplasm. It catalyses the reaction 5-[(5-phospho-1-deoxy-D-ribulos-1-ylimino)methylamino]-1-(5-phospho-beta-D-ribosyl)imidazole-4-carboxamide + L-glutamine = D-erythro-1-(imidazol-4-yl)glycerol 3-phosphate + 5-amino-1-(5-phospho-beta-D-ribosyl)imidazole-4-carboxamide + L-glutamate + H(+). It functions in the pathway amino-acid biosynthesis; L-histidine biosynthesis; L-histidine from 5-phospho-alpha-D-ribose 1-diphosphate: step 5/9. Functionally, IGPS catalyzes the conversion of PRFAR and glutamine to IGP, AICAR and glutamate. The HisF subunit catalyzes the cyclization activity that produces IGP and AICAR from PRFAR using the ammonia provided by the HisH subunit. This chain is Imidazole glycerol phosphate synthase subunit HisF, found in Paraburkholderia xenovorans (strain LB400).